Reading from the N-terminus, the 170-residue chain is Acetyl-CoA decarbonylase/synthase complex subunit epsilon 1 (170 aa).

This sequence belongs to the CdhB family. Heterotetramer of two alpha and two epsilon subunits. The ACDS complex is made up of alpha, epsilon, beta, gamma and delta subunits with a probable stoichiometry of (alpha(2)epsilon(2))(4)-beta(8)-(gamma(1)delta(1))(8).

The protein operates within one-carbon metabolism; methanogenesis from acetate. Part of a complex that catalyzes the reversible cleavage of acetyl-CoA, allowing growth on acetate as sole source of carbon and energy. The alpha-epsilon subcomponent functions as a carbon monoxide dehydrogenase. The precise role of the epsilon subunit is unclear; it may have a stabilizing role within the alpha(2)epsilon(2) component and/or be involved in electron transfer to FAD during a potential FAD-mediated CO oxidation. This chain is Acetyl-CoA decarbonylase/synthase complex subunit epsilon 1 (cdhB1), found in Methanosarcina mazei (strain ATCC BAA-159 / DSM 3647 / Goe1 / Go1 / JCM 11833 / OCM 88) (Methanosarcina frisia).